A 284-amino-acid polypeptide reads, in one-letter code: CBY1-interacting BAR domain-containing protein 1-A (284 aa).

A mitochondrion-targeting transit peptide spans 1–48 (MSQTPEARARDNQTRQIQESVNNVEKHFGELCQIFAGYVRKTARLRDK). Positions 11–221 (DNQTRQIQES…DIDEEEDLEV (211 aa)) are BAR-like. Coiled coils occupy residues 142–184 (RQII…IKKL) and 260–284 (NRQKNRIEDEDEEEEDDENSTEDEN). Positions 242–261 (SRTGSTSRGPSVISQPPGNR) are enriched in polar residues. The tract at residues 242-284 (SRTGSTSRGPSVISQPPGNRQKNRIEDEDEEEEDDENSTEDEN) is disordered. Positions 267–284 (EDEDEEEEDDENSTEDEN) are enriched in acidic residues.

Belongs to the CIBAR family.

Its subcellular location is the cytoplasm. The protein resides in the cytoskeleton. The protein localises to the microtubule organizing center. It localises to the centrosome. It is found in the centriole. Its subcellular location is the nucleus. The protein resides in the mitochondrion inner membrane. The protein localises to the cell projection. It localises to the cilium. It is found in the flagellum. Functionally, plays a critical role in regulating mitochondrial ultrastructure and function by maintaining the integrity of mitochondrial morphology, particularly the organization of cristae. Plays a crucial role in ciliogenesis. Plays a key role in the correct positioning of the annulus, a septin-based ring structure in the sperm flagellum, serving both as a physical barrier and a membrane diffusion barrier that separates the midpiece (MP) from the principal piece (PP). The polypeptide is CBY1-interacting BAR domain-containing protein 1-A (Xenopus laevis (African clawed frog)).